The primary structure comprises 166 residues: MIIMGIDPGFAITGYGVVKYEGNKFSVLDYNAITTVASMKFSDRLLVLYNELEKLINKFRPDAISIEELFFNKNIKTALTVGHGRGVAVLAAAKSGIDIFEYTPLQVKQSVVGYGRAEKAQVQQMVKAILNLPAIPKPDDVADALAVAICHGNSHRMGALLGNDRF.

Residues Asp7, Glu67, and Asp140 contribute to the active site. 3 residues coordinate Mg(2+): Asp7, Glu67, and Asp140.

The protein belongs to the RuvC family. In terms of assembly, homodimer which binds Holliday junction (HJ) DNA. The HJ becomes 2-fold symmetrical on binding to RuvC with unstacked arms; it has a different conformation from HJ DNA in complex with RuvA. In the full resolvosome a probable DNA-RuvA(4)-RuvB(12)-RuvC(2) complex forms which resolves the HJ. The cofactor is Mg(2+).

The protein resides in the cytoplasm. The enzyme catalyses Endonucleolytic cleavage at a junction such as a reciprocal single-stranded crossover between two homologous DNA duplexes (Holliday junction).. In terms of biological role, the RuvA-RuvB-RuvC complex processes Holliday junction (HJ) DNA during genetic recombination and DNA repair. Endonuclease that resolves HJ intermediates. Cleaves cruciform DNA by making single-stranded nicks across the HJ at symmetrical positions within the homologous arms, yielding a 5'-phosphate and a 3'-hydroxyl group; requires a central core of homology in the junction. The consensus cleavage sequence is 5'-(A/T)TT(C/G)-3'. Cleavage occurs on the 3'-side of the TT dinucleotide at the point of strand exchange. HJ branch migration catalyzed by RuvA-RuvB allows RuvC to scan DNA until it finds its consensus sequence, where it cleaves and resolves the cruciform DNA. The sequence is that of Crossover junction endodeoxyribonuclease RuvC from Ruminiclostridium cellulolyticum (strain ATCC 35319 / DSM 5812 / JCM 6584 / H10) (Clostridium cellulolyticum).